A 68-amino-acid chain; its full sequence is Large ribosomal subunit protein uL29 (68 aa).

The protein belongs to the universal ribosomal protein uL29 family.

In Limosilactobacillus fermentum (strain NBRC 3956 / LMG 18251) (Lactobacillus fermentum), this protein is Large ribosomal subunit protein uL29.